The primary structure comprises 439 residues: Homogentisate 1,2-dioxygenase (439 aa).

The Proton acceptor role is filled by His-293. Fe cation contacts are provided by His-336 and Glu-342. Homogentisate-binding residues include Tyr-351 and His-372. His-372 contacts Fe cation.

It belongs to the homogentisate dioxygenase family. As to quaternary structure, hexamer; dimer of trimers. Fe cation is required as a cofactor.

It carries out the reaction homogentisate + O2 = 4-maleylacetoacetate + H(+). Its pathway is amino-acid degradation; L-phenylalanine degradation; acetoacetate and fumarate from L-phenylalanine: step 4/6. Involved in the catabolism of homogentisate (2,5-dihydroxyphenylacetate or 2,5-OH-PhAc), a central intermediate in the degradation of phenylalanine and tyrosine. Catalyzes the oxidative ring cleavage of the aromatic ring of homogentisate to yield maleylacetoacetate. This Cupriavidus pinatubonensis (strain JMP 134 / LMG 1197) (Cupriavidus necator (strain JMP 134)) protein is Homogentisate 1,2-dioxygenase.